The following is a 202-amino-acid chain: Large ribosomal subunit protein uL13 (202 aa).

It belongs to the universal ribosomal protein uL13 family. As to quaternary structure, component of the large ribosomal subunit (LSU). Mature N.crassa ribosomes consist of a small (40S) and a large (60S) subunit. The 40S small subunit contains 1 molecule of ribosomal RNA (18S rRNA) and at least 32 different proteins. The large 60S subunit contains 3 rRNA molecules (26S, 5.8S and 5S rRNA) and at least 42 different proteins.

The protein localises to the cytoplasm. Component of the ribosome, a large ribonucleoprotein complex responsible for the synthesis of proteins in the cell. The small ribosomal subunit (SSU) binds messenger RNAs (mRNAs) and translates the encoded message by selecting cognate aminoacyl-transfer RNA (tRNA) molecules. The large subunit (LSU) contains the ribosomal catalytic site termed the peptidyl transferase center (PTC), which catalyzes the formation of peptide bonds, thereby polymerizing the amino acids delivered by tRNAs into a polypeptide chain. The nascent polypeptides leave the ribosome through a tunnel in the LSU and interact with protein factors that function in enzymatic processing, targeting, and the membrane insertion of nascent chains at the exit of the ribosomal tunnel. The polypeptide is Large ribosomal subunit protein uL13 (crp-46) (Neurospora crassa (strain ATCC 24698 / 74-OR23-1A / CBS 708.71 / DSM 1257 / FGSC 987)).